The sequence spans 598 residues: Biotin-dependent acyl-coenzyme A carboxylase alpha3 subunit (598 aa).

The 445-residue stretch at arginine 8 to glutamate 452 folds into the Biotin carboxylation domain. In terms of domain architecture, ATP-grasp spans arginine 127 to asparagine 324. Residue alanine 155–valine 216 participates in ATP binding. Residues glutamate 282, glutamate 295, and asparagine 297 each coordinate Mg(2+). Residues glutamate 282, glutamate 295, and asparagine 297 each contribute to the Mn(2+) site. The interval proline 506–alanine 531 is disordered. The segment covering isoleucine 510–glycine 521 has biased composition (basic residues). Residues histidine 522–lysine 598 form the Biotinyl-binding domain. Lysine 564 is subject to N6-biotinyllysine.

As to quaternary structure, the biotin-dependent acyl-CoA carboxylase complex is composed of AccA3, which contains the biotin carboxylase (BC) and biotin carboxyl carrier protein (BCCP) domains, and an AccD protein, which contains the carboxyl transferase (CT) domain. Requires Mg(2+) as cofactor. Mn(2+) is required as a cofactor. It depends on biotin as a cofactor.

The enzyme catalyses N(6)-biotinyl-L-lysyl-[protein] + hydrogencarbonate + ATP = N(6)-carboxybiotinyl-L-lysyl-[protein] + ADP + phosphate + H(+). The protein operates within lipid metabolism; fatty acid biosynthesis. Its pathway is lipid metabolism; mycolic acid biosynthesis. In terms of biological role, component of a biotin-dependent acyl-CoA carboxylase complex. This subunit catalyzes the ATP-dependent carboxylation of the biotin carried by the biotin carboxyl carrier (BCC) domain, resulting in the formation of carboxyl biotin. This is Biotin-dependent acyl-coenzyme A carboxylase alpha3 subunit (bccA) from Mycobacterium leprae (strain TN).